Consider the following 435-residue polypeptide: Virulence factor PIT1 (435 aa).

5 consecutive transmembrane segments (helical) span residues 33-53 (ETTT…SEVI), 77-97 (IFFI…ILVT), 111-131 (WAWT…CVIG), 143-163 (VASW…MWTN), and 204-224 (TFWF…ACCI). N-linked (GlcNAc...) asparagine glycosylation is present at asparagine 330. Positions 392–404 (SPQMPSKAQSQSI) are enriched in polar residues. Residues 392 to 435 (SPQMPSKAQSQSIPYKREVEVTVDMSPVPPPPGPSPAPLPAPYM) are disordered. The segment covering 418–435 (PVPPPPGPSPAPLPAPYM) has biased composition (pro residues).

O-mannosylated by PMT4. Is also N-glycosylated.

Its subcellular location is the cell membrane. In terms of biological role, plasma membrane virulence factor required for spreading and inducing tumors in infected leaves. This chain is Virulence factor PIT1, found in Mycosarcoma maydis (Corn smut fungus).